Consider the following 204-residue polypeptide: Ciliary microtubule inner protein 7 (204 aa).

The protein localises to the cell projection. It localises to the cilium. The sequence is that of Ciliary microtubule inner protein 7 from Homo sapiens (Human).